The following is a 699-amino-acid chain: Homeobox-leucine zipper protein HDG8 (699 aa).

The interval 1–31 (MDNNGGGSSGNEQYTSGDAKQNGKRTCHRHT) is disordered. Residues 10-19 (GNEQYTSGDA) show a composition bias toward polar residues. The segment covering 22–31 (NGKRTCHRHT) has biased composition (basic residues). The segment at residues 23–82 (GKRTCHRHTPQQIQRLEAYFKECPHPDERQRNQLCRELKLEPDQIKFWFQNKRTQSKTQE) is a DNA-binding region (homeobox). Residues 89–149 (LLRGENETLQ…LKDHRDRISN (61 aa)) are a coiled coil. The 235-residue stretch at 204–438 (AETDMSLLSE…LERMCERMAL (235 aa)) folds into the START domain.

It belongs to the HD-ZIP homeobox family. Class IV subfamily. As to quaternary structure, interacts with ANT. In terms of tissue distribution, expressed in the embryo at early stage and in the endosperm.

The protein localises to the nucleus. Probable transcription factor. This chain is Homeobox-leucine zipper protein HDG8, found in Arabidopsis thaliana (Mouse-ear cress).